Reading from the N-terminus, the 201-residue chain is Inner membrane protein YnbA (201 aa).

The Periplasmic portion of the chain corresponds to 1-43 (MTLYQIKPLFQSLLRPTMFWLYKHHVTANHITLAALALSLLTG). Residues 44 to 64 (LLLMLAAQPILFLLLPIVLFI) traverse the membrane as a helical segment. At 65–84 (RMALNALDGMLARECNQQTR) the chain is on the cytoplasmic side. The chain crosses the membrane as a helical span at residues 85–107 (LGAILNETGDVISDIALYLPFLF). Residues 108–116 (LPESNASLV) lie on the Periplasmic side of the membrane. Residues 117-139 (ILMLFCTILTEFCGLLAQTINGV) form a helical membrane-spanning segment. The Cytoplasmic segment spans residues 140–151 (RSYAGPFGKSDR). The chain crosses the membrane as a helical span at residues 152–172 (ALIFGLWGLAVAIYPQWMQWN). The Periplasmic portion of the chain corresponds to 173–175 (NLL). A helical transmembrane segment spans residues 176 to 196 (WSIASILLLWTAINRCRSVLL). Residues 197 to 201 (MSAEI) are Cytoplasmic-facing.

It is found in the cell inner membrane. In Escherichia coli (strain K12), this protein is Inner membrane protein YnbA (ynbA).